Here is a 445-residue protein sequence, read N- to C-terminus: UDP-N-acetylmuramoylalanine--D-glutamate ligase (445 aa).

Residue 118–124 (GTNGKTT) participates in ATP binding.

This sequence belongs to the MurCDEF family.

The protein resides in the cytoplasm. It carries out the reaction UDP-N-acetyl-alpha-D-muramoyl-L-alanine + D-glutamate + ATP = UDP-N-acetyl-alpha-D-muramoyl-L-alanyl-D-glutamate + ADP + phosphate + H(+). It participates in cell wall biogenesis; peptidoglycan biosynthesis. In terms of biological role, cell wall formation. Catalyzes the addition of glutamate to the nucleotide precursor UDP-N-acetylmuramoyl-L-alanine (UMA). This is UDP-N-acetylmuramoylalanine--D-glutamate ligase from Macrococcus caseolyticus (strain JCSC5402) (Macrococcoides caseolyticum).